Here is a 1650-residue protein sequence, read N- to C-terminus: Transmembrane domain-containing protein DDB_G0287209 (1650 aa).

A coiled-coil region spans residues 194–225; it reads NNNNNNFNNNNNNNNNNNNNKNNYNNNKSNLI. Disordered regions lie at residues 197-216 and 1218-1296; these read NNNF…NKNN and ENQF…NINN. The segment covering 1224-1284 has biased composition (low complexity); it reads NNNENSGSSG…SNSNENNYNG (61 aa). 9 consecutive transmembrane segments (helical) span residues 1314 to 1334, 1347 to 1369, 1390 to 1410, 1454 to 1474, 1489 to 1509, 1515 to 1535, 1539 to 1559, 1570 to 1590, and 1595 to 1615; these read PLLL…LSLF, ILFL…LQLF, ISIS…DVTS, WNIY…LIVP, ILFI…VILF, WWDL…VTLL, PVYF…QFAF, VENL…TSII, and FNLI…ITII.

Its subcellular location is the membrane. The sequence is that of Transmembrane domain-containing protein DDB_G0287209 from Dictyostelium discoideum (Social amoeba).